The following is a 323-amino-acid chain: GTP 3',8-cyclase (323 aa).

Positions 4-226 (TFQRQINYLR…LEPFPDLATN (223 aa)) constitute a Radical SAM core domain. Arg13 serves as a coordination point for GTP. Positions 20 and 24 each coordinate [4Fe-4S] cluster. An S-adenosyl-L-methionine-binding site is contributed by Tyr26. Cys27 is a binding site for [4Fe-4S] cluster. Arg63 is a binding site for GTP. An S-adenosyl-L-methionine-binding site is contributed by Gly67. A GTP-binding site is contributed by Thr94. Ser118 contacts S-adenosyl-L-methionine. Lys155 serves as a coordination point for GTP. Met189 serves as a coordination point for S-adenosyl-L-methionine. [4Fe-4S] cluster-binding residues include Cys252 and Cys255. 257–259 (RLR) lines the GTP pocket. Cys269 provides a ligand contact to [4Fe-4S] cluster.

Belongs to the radical SAM superfamily. MoaA family. As to quaternary structure, monomer and homodimer. [4Fe-4S] cluster serves as cofactor.

It catalyses the reaction GTP + AH2 + S-adenosyl-L-methionine = (8S)-3',8-cyclo-7,8-dihydroguanosine 5'-triphosphate + 5'-deoxyadenosine + L-methionine + A + H(+). Its pathway is cofactor biosynthesis; molybdopterin biosynthesis. Functionally, catalyzes the cyclization of GTP to (8S)-3',8-cyclo-7,8-dihydroguanosine 5'-triphosphate. This Moorella thermoacetica (strain ATCC 39073 / JCM 9320) protein is GTP 3',8-cyclase.